The sequence spans 223 residues: Large ribosomal subunit protein uL4 (223 aa).

Residues 49-106 (AAARQGTHSTKTRGEVSGGGRKPYRQKGTGRARQGSTRAPQFTGGGVVHGPKPRDYSQ) form a disordered region.

This sequence belongs to the universal ribosomal protein uL4 family. As to quaternary structure, part of the 50S ribosomal subunit.

Its function is as follows. One of the primary rRNA binding proteins, this protein initially binds near the 5'-end of the 23S rRNA. It is important during the early stages of 50S assembly. It makes multiple contacts with different domains of the 23S rRNA in the assembled 50S subunit and ribosome. Forms part of the polypeptide exit tunnel. In Mycobacterium bovis (strain ATCC BAA-935 / AF2122/97), this protein is Large ribosomal subunit protein uL4.